Here is a 420-residue protein sequence, read N- to C-terminus: GDP-mannose transporter 2 (420 aa).

The span at 1-11 (MASYTPSSSRP) shows a compositional bias: polar residues. The segment at 1–21 (MASYTPSSSRPHTPLGLSPRG) is disordered. Residues 1 to 76 (MASYTPSSSR…KAKKEEVCMP (76 aa)) are Cytoplasmic-facing. Residues 77–97 (ASTTVLPILSYCVASIMMTVV) form a helical membrane-spanning segment. At 98–106 (NKFVVSGRQ) the chain is on the lumenal side. The helical transmembrane segment at 107 to 127 (FTMTFLLLAIQSFVCVACVWL) threads the bilayer. At 128–145 (AKRIGVINFRDWDMNDAK) the chain is on the cytoplasmic side. The helical transmembrane segment at 146-168 (AWFPVSSLLVAVIYTGSKSLQFL) threads the bilayer. Topologically, residues 169 to 171 (SIP) are lumenal. Residues 172–194 (VYTIFKNLTIILIAYGEVIWFGG) traverse the membrane as a helical segment. The Cytoplasmic portion of the chain corresponds to 195 to 200 (HVTPLT). The helical transmembrane segment at 201 to 223 (LCSFFLMVGSSVIAAWADISTTL) threads the bilayer. Topologically, residues 224-251 (SKLSAGVAVVDPISGADVPLSSISVMDT) are lumenal. Residues 252–272 (MNVGYLWMFINCLASAGYVLF) traverse the membrane as a helical segment. Residues 273–293 (MRKRIKVTGFKDWDSMFYNNL) lie on the Cytoplasmic side of the membrane. The chain crosses the membrane as a helical span at residues 294–314 (LSIPVLFVFSLIIEDWGAASF). Residues 315-323 (SRNFPEEGR) are Lumenal-facing. A helical membrane pass occupies residues 324–344 (AFLLSAIAFSGAAAVFISYST). The Cytoplasmic portion of the chain corresponds to 345–355 (AWCVRICGATT). The helical transmembrane segment at 356 to 376 (YSLVGALNKLPVAASGILFFG) threads the bilayer. The Lumenal portion of the chain corresponds to 377 to 378 (DP). A helical membrane pass occupies residues 379–399 (VNFGNVSAILVGGVSGIVYAV). At 400-420 (AKTNQAKVEKSKQARGGESKA) the chain is on the cytoplasmic side.

It belongs to the TPT transporter family. SLC35D subfamily. As to quaternary structure, homooligomer.

It localises to the golgi apparatus membrane. It is found in the cytoplasmic vesicle membrane. The protein resides in the endoplasmic reticulum membrane. In terms of biological role, involved in the import of GDP-mannose from the cytoplasm into the Golgi lumen. In Cryptococcus neoformans var. neoformans serotype D (strain B-3501A) (Filobasidiella neoformans), this protein is GDP-mannose transporter 2 (GMT2).